The sequence spans 225 residues: Vacuolar protein sorting-associated protein 2 homolog 1 (225 aa).

A coiled-coil region spans residues 13–54 (AELLRENKRMLDKSIREIERERQGLQTQEKKLINEIKKTAKQ).

This sequence belongs to the SNF7 family. Component of the endosomal sorting required for transport complex III (ESCRT-III), composed at least of VPS2, VPS20, VPS24 and VPS32. Interacts with SKD1.

It localises to the endosome. Functionally, component of the ESCRT-III complex, which is required for multivesicular bodies (MVBs) formation and sorting of endosomal cargo proteins into MVBs. The ESCRT-III complex is probably involved in the concentration of MVB cargo. This Arabidopsis thaliana (Mouse-ear cress) protein is Vacuolar protein sorting-associated protein 2 homolog 1 (VPS2.1).